The primary structure comprises 487 residues: Bifunctional protein GlmU (487 aa).

Residues 1–235 (MSHSPTPLAA…PEEASGVNDR (235 aa)) form a pyrophosphorylase region. Residues 13–16 (LAAG), K27, Q82, 87–88 (GT), 110–112 (SGD), G147, E162, N177, and N233 contribute to the UDP-N-acetyl-alpha-D-glucosamine site. D112 lines the Mg(2+) pocket. N233 is a binding site for Mg(2+). Positions 236–256 (EELARAGRVLLRRRASELMRS) are linker. The tract at residues 257–487 (GVTIEDPERF…ADSPRGGRAS (231 aa)) is N-acetyltransferase. Residues R339 and K357 each coordinate UDP-N-acetyl-alpha-D-glucosamine. The active-site Proton acceptor is the H369. Residues Y372 and N383 each coordinate UDP-N-acetyl-alpha-D-glucosamine. Residues A386, 392 to 393 (NY), S411, A429, and R446 each bind acetyl-CoA. Positions 453-487 (EGWVARRKAEAQNKGAAEAAPAPSPADSPRGGRAS) are disordered. A compositionally biased stretch (low complexity) spans 468 to 481 (AAEAAPAPSPADSP).

It in the N-terminal section; belongs to the N-acetylglucosamine-1-phosphate uridyltransferase family. In the C-terminal section; belongs to the transferase hexapeptide repeat family. As to quaternary structure, homotrimer. Mg(2+) serves as cofactor.

It localises to the cytoplasm. The catalysed reaction is alpha-D-glucosamine 1-phosphate + acetyl-CoA = N-acetyl-alpha-D-glucosamine 1-phosphate + CoA + H(+). It carries out the reaction N-acetyl-alpha-D-glucosamine 1-phosphate + UTP + H(+) = UDP-N-acetyl-alpha-D-glucosamine + diphosphate. Its pathway is nucleotide-sugar biosynthesis; UDP-N-acetyl-alpha-D-glucosamine biosynthesis; N-acetyl-alpha-D-glucosamine 1-phosphate from alpha-D-glucosamine 6-phosphate (route II): step 2/2. It functions in the pathway nucleotide-sugar biosynthesis; UDP-N-acetyl-alpha-D-glucosamine biosynthesis; UDP-N-acetyl-alpha-D-glucosamine from N-acetyl-alpha-D-glucosamine 1-phosphate: step 1/1. It participates in bacterial outer membrane biogenesis; LPS lipid A biosynthesis. Catalyzes the last two sequential reactions in the de novo biosynthetic pathway for UDP-N-acetylglucosamine (UDP-GlcNAc). The C-terminal domain catalyzes the transfer of acetyl group from acetyl coenzyme A to glucosamine-1-phosphate (GlcN-1-P) to produce N-acetylglucosamine-1-phosphate (GlcNAc-1-P), which is converted into UDP-GlcNAc by the transfer of uridine 5-monophosphate (from uridine 5-triphosphate), a reaction catalyzed by the N-terminal domain. The protein is Bifunctional protein GlmU of Anaeromyxobacter sp. (strain Fw109-5).